The sequence spans 292 residues: Syntenin-2 (292 aa).

PDZ domains lie at 108 to 187 (EIHL…IRDR) and 192 to 267 (TVTM…IPTV).

In terms of assembly, monomer and homodimer. Interacts with SDCBP. Interacts with TM4SF1.

It localises to the cytoplasm. The protein localises to the nucleus. Its subcellular location is the nucleolus. It is found in the nucleoplasm. The protein resides in the cell membrane. It localises to the nucleus speckle. Functionally, binds phosphatidylinositol 4,5-bisphosphate (PIP2). May play a role in the organization of nuclear PIP2, cell division and cell survival. This chain is Syntenin-2 (Sdcbp2), found in Mus musculus (Mouse).